Reading from the N-terminus, the 458-residue chain is Estrogen-related receptor gamma (458 aa).

Residue K40 forms a Glycyl lysine isopeptide (Lys-Gly) (interchain with G-Cter in SUMO) linkage. Positions 42 to 52 are enriched in polar residues; sequence EPSSPASLTDS. Positions 42–85 are disordered; that stretch reads EPSSPASLTDSVNHHSPGGSSDASGSYSSTMNGHQNGLDSPPLY. S45 carries the post-translational modification Phosphoserine. A compositionally biased stretch (low complexity) spans 57-70; it reads SPGGSSDASGSYSS. The segment at residues 125–200 is a DNA-binding region (nuclear receptor); that stretch reads KRLCLVCGDI…VGMLKEGVRL (76 aa). NR C4-type zinc fingers lie at residues 128 to 148 and 164 to 188; these read CLVC…CEAC and CPAT…FMKC. The NR LBD domain maps to 233 to 457; the sequence is PYNKIVSHLL…KLFLEMLEAK (225 aa).

This sequence belongs to the nuclear hormone receptor family. NR3 subfamily. As to quaternary structure, homodimer. Binds TLE1, PNRC1 and PNRC2. Binds GRIP1. Interacts with NRIP1, NCOA1 and NCOR2. Acetylated by PCAF/KAT2 (in vitro). In terms of processing, sumoylation on Lys-40 is enhanced by phosphorylation at Ser-45 and represses transcriptional activity. Post-translationally, phosphorylation on Ser-45 enhances sumoylation on Lys-40 thus repressing transcriptional activity. Expressed in the heart, kidney, brain, lung, bone marrow, adrenal gland, trachea, spinal cord and thyroid gland.

The protein localises to the nucleus. Functionally, orphan receptor that acts as a transcription activator in the absence of bound ligand. Binds specifically to an estrogen response element and activates reporter genes controlled by estrogen response elements. Induces the expression of PERM1 in the skeletal muscle. This chain is Estrogen-related receptor gamma (ESRRG), found in Homo sapiens (Human).